A 1282-amino-acid polypeptide reads, in one-letter code: Myosin-1 (1282 aa).

Residues 1 to 30 are disordered; the sequence is MAISKKAGAKKAGAVSKPPPSKGASSKGGV. One can recognise a Myosin motor domain in the interval 44 to 723; the sequence is AGVSDMTLLS…TLFALETMRD (680 aa). Position 137–144 (137–144) interacts with ATP; the sequence is GESGAGKT. Serine 365 bears the Phosphoserine mark. The interval 412 to 494 is actin-binding; that stretch reads VIGVLDIYGF…PGIFSALNDA (83 aa). Positions 569-590 are disordered; that stretch reads LQKLFPDRPDPNSKKRPPTAGD. IQ domains lie at 727 to 747 and 748 to 773; these read HNMA…KEEC and ARRI…YGHQ. Residues 781–977 form the TH1 domain; it reads RRRFSLLGLR…AVSVCSGEPA (197 aa). The tract at residues 973–1073 is disordered; it reads SGEPANSVSR…PPPAAVAPSE (101 aa). A compositionally biased stretch (low complexity) spans 1029-1058; sequence PGSGAAGTARPAAAVGSASAGAGVGATRSA. The span at 1059 to 1068 shows a compositional bias: pro residues; sequence PRPPPPPPAA. Positions 1074-1135 constitute an SH3 domain; the sequence is PQVARYKALY…PSNYLELIVQ (62 aa). Residues 1237–1282 form a disordered region; the sequence is AAAAAAGAGANGKGAGAPPAVAAKPVVAPKPAGSNGRAMPPPPPRR. The segment covering 1252-1269 has biased composition (low complexity); it reads GAPPAVAAKPVVAPKPAG.

The protein belongs to the TRAFAC class myosin-kinesin ATPase superfamily. Myosin family. Phosphorylation of the TEDS site (Ser-365) is required for the polarization of the actin cytoskeleton. Phosphorylation probably activates the myosin-I ATPase activity.

The protein resides in the cytoplasm. Its subcellular location is the cytoskeleton. The protein localises to the actin patch. Functionally, type-I myosin implicated in the organization of the actin cytoskeleton. Required for proper actin cytoskeleton polarization. At the cell cortex, assembles in patch-like structures together with proteins from the actin-polymerizing machinery and promotes actin assembly. Functions as actin nucleation-promoting factor (NPF) for the Arp2/3 complex. The chain is Myosin-1 (myo1) from Mycosarcoma maydis (Corn smut fungus).